Consider the following 347-residue polypeptide: Heat-inducible transcription repressor HrcA (347 aa).

It belongs to the HrcA family.

Its function is as follows. Negative regulator of class I heat shock genes (grpE-dnaK-dnaJ and groELS operons). Prevents heat-shock induction of these operons. In Rhodococcus jostii (strain RHA1), this protein is Heat-inducible transcription repressor HrcA.